Here is a 398-residue protein sequence, read N- to C-terminus: Phosphoglycerate kinase (398 aa).

Residues 22–24 (DFN), R38, 61–64 (HLGR), R120, and R153 contribute to the substrate site. Residues K206, G297, E328, and 354–357 (GGDT) contribute to the ATP site.

Belongs to the phosphoglycerate kinase family. In terms of assembly, monomer.

It localises to the cytoplasm. It carries out the reaction (2R)-3-phosphoglycerate + ATP = (2R)-3-phospho-glyceroyl phosphate + ADP. It participates in carbohydrate degradation; glycolysis; pyruvate from D-glyceraldehyde 3-phosphate: step 2/5. This chain is Phosphoglycerate kinase, found in Nautilia profundicola (strain ATCC BAA-1463 / DSM 18972 / AmH).